Reading from the N-terminus, the 329-residue chain is Interferon regulatory factor 1 (329 aa).

The segment at residues 5 to 113 (RMRMRPWLEM…SAVRVYRMLP (109 aa)) is a DNA-binding region (IRF tryptophan pentad repeat). The residue at position 78 (Lys78) is an N6-acetyllysine. The interval 93–166 (EVKDQSRNKG…LPDDHSSYTT (74 aa)) is disordered. Residues 146-166 (DTFSDGLSSSTLPDDHSSYTT) are compositionally biased toward polar residues. Glycyl lysine isopeptide (Lys-Gly) (interchain with G-Cter in SUMO) cross-links involve residues Lys276 and Lys300.

It belongs to the IRF family. As to quaternary structure, monomer. Homodimer. Interacts with EP300. Interacts with MYD88. Interacts with PIAS3. Interacts with SPOP. Post-translationally, phosphorylated by CK2 and this positively regulates its activity. In terms of processing, ubiquitinated in a SPOP-depedent manner. Sumoylation represses the transcriptional activity and displays enhanced resistance to protein degradation. Sumoylated by UBE2I/UBC9 and SUMO1. Inactivates the tumor suppressor activity. Elevated levels in tumor cells. Major site is Lys-276. Sumoylation is enhanced by PIAS3. Desumoylated by SENP1 in tumor cells and appears to compete with ubiquitination on C-terminal sites. Ubiquitinated. Appears to compete with sumoylation on C-terminal sites.

The protein localises to the nucleus. It localises to the cytoplasm. Activated by MYD88. Transcriptional regulator which displays a remarkable functional diversity in the regulation of cellular responses. Regulates transcription of IFN and IFN-inducible genes, host response to viral and bacterial infections, regulation of many genes expressed during hematopoiesis, inflammation, immune responses and cell proliferation and differentiation, regulation of the cell cycle and induction of growth arrest and programmed cell death following DNA damage. Stimulates both innate and acquired immune responses through the activation of specific target genes and can act as a transcriptional activator and repressor regulating target genes by binding to an interferon-stimulated response element (ISRE) in their promoters. Has an essentail role in IFNG-dependent immunity to mycobacteria. Binds to a consensus sequence in gene promoters. Its target genes for transcriptional activation activity are: genes involved in anti-viral response, such as IFN-alpha/beta, RIGI, TNFSF10/TRAIL, ZBP1, OAS1/2, PIAS1/GBP, EIF2AK2/PKR and RSAD2/viperin; antibacterial response, such as GBP2, GBP5, IRGB10 and NOS2/INOS; anti-proliferative response, such as p53/TP53, LOX and CDKN1A; apoptosis, such as BBC3/PUMA, CASP1, CASP7 and CASP8; immune response, such as IL7, IL12A/B and IL15, PTGS2/COX2 and CYBB; DNA damage responses and DNA repair, such as POLQ/POLH; MHC class I expression, such as TAP1, PSMB9/LMP2, PSME1/PA28A, PSME2/PA28B and B2M and MHC class II expression, such as CIITA; metabolic enzymes, such as ACOD1/IRG1. Represses genes involved in anti-proliferative response, such as BIRC5/survivin, CCNB1, CCNE1, CDK1, CDK2 and CDK4 and in immune response, such as FOXP3, IL4, ANXA2 and TLR4. Stimulates p53/TP53-dependent transcription through enhanced recruitment of EP300 leading to increased acetylation of p53/TP53. Plays an important role in immune response directly affecting NK maturation and activity, macrophage production of IL12, Th1 development and maturation of CD8+ T-cells. Also implicated in the differentiation and maturation of dendritic cells and in the suppression of regulatory T (Treg) cells development. Acts as a tumor suppressor and plays a role not only in antagonism of tumor cell growth but also in stimulating an immune response against tumor cells. The protein is Interferon regulatory factor 1 (Irf1) of Mus musculus (Mouse).